The following is a 152-amino-acid chain: uncharacterized protein (152 aa).

At 1–5 (MWFPQ) the chain is on the cytoplasmic side. Residues 6–26 (IIAGMAAGGAASAMTPGKVLF) form a helical membrane-spanning segment. Residues 27-38 (TNALGLGCSRSR) are Extracellular-facing. A helical transmembrane segment spans residues 39–59 (GLFLEMFGTAVLCLTVLMTAV). The Cytoplasmic segment spans residues 60-65 (EKRETN). Residues 66 to 86 (FMAALPIGISLFMAHMALTGY) traverse the membrane as a helical segment. The Extracellular portion of the chain corresponds to 87 to 110 (TGTGVNPARSLGAAVAARYFPHYH). The short motif at 92-94 (NPA) is the NPA element. A helical membrane pass occupies residues 111 to 131 (WIYWISPLLGAFLAWSVWQLL). Topologically, residues 132-152 (QILDYTTYVNAEKAAGQKKED) are cytoplasmic.

Belongs to the MIP/aquaporin (TC 1.A.8) family.

It is found in the membrane. This is an uncharacterized protein from Saccharomyces cerevisiae (strain RM11-1a) (Baker's yeast).